Consider the following 119-residue polypeptide: Large ribosomal subunit protein bL20 (119 aa).

The protein belongs to the bacterial ribosomal protein bL20 family.

Binds directly to 23S ribosomal RNA and is necessary for the in vitro assembly process of the 50S ribosomal subunit. It is not involved in the protein synthesizing functions of that subunit. This chain is Large ribosomal subunit protein bL20, found in Alkalilimnicola ehrlichii (strain ATCC BAA-1101 / DSM 17681 / MLHE-1).